Consider the following 1122-residue polypeptide: Phytochrome A (1122 aa).

Polar residues predominate over residues 1 to 11 (MSGSRPTQSSE). The tract at residues 1 to 21 (MSGSRPTQSSEGSRRSRHSAR) is disordered. The region spanning 218–402 (SMERLCDTMV…VFAIHVNKEV (185 aa)) is the GAF domain. C323 contacts phytochromobilin. Residues 618–688 (VTSEMVRLIE…RMLENALEGT (71 aa)) enclose the PAS 1 domain. Residues 695 to 747 (FEIKTHLSRADAGPISLVVNACASRDLHENVVGVCFVAHDLTGQKTVMDKFTR) enclose the PAC domain. The 75-residue stretch at 748–822 (IEGDYKAIIQ…KNQEAFVNLG (75 aa)) folds into the PAS 2 domain. The Histidine kinase domain occupies 902–1119 (YIKRQIRNPL…SFIITAELAA (218 aa)).

This sequence belongs to the phytochrome family. As to quaternary structure, homodimer. Interacts with NDPK2 and PKS4. Stabilized by interactions with PAPP5 and FYPP3 which are enhanced in the phosphorylated Pfr form. Interacts with COP1/SPA1 complex. Binds, via its photosensory domain, to PTAC12/HMR when photoactivated; this interaction stimulates its localization to photobodies. Interacts with FHY1, FHL and FHY3, especially upon far-red (FR) light illumination; when underphosphorylated. Forms PHYA/FHY1/HFR1 complex. Binds to PIF3/PAP3. In terms of processing, phosphorylated. Post-translationally, contains one covalently linked phytochromobilin chromophore. In terms of tissue distribution, expressed in fruits, flowers, leaves, stems, seedlings and roots.

It localises to the cytoplasm. Its subcellular location is the nucleus. It is found in the nucleoplasm. The protein resides in the nucleus speckle. Its function is as follows. Regulatory photoreceptor which exists in two forms that are reversibly interconvertible by light: the Pr form that absorbs maximally in the red region of the spectrum and the Pfr form that absorbs maximally in the far-red region. Photoconversion of Pr to Pfr induces an array of morphogenetic responses, whereas reconversion of Pfr to Pr cancels the induction of those responses. Pfr controls the expression of a number of nuclear genes including those encoding the small subunit of ribulose-bisphosphate carboxylase, chlorophyll A/B binding protein, protochlorophyllide reductase, rRNA, etc. It also controls the expression of its own gene(s) in a negative feedback fashion. Involved in the flowering time regulation. Can phosphorylate FHY1 and, possibly, FHL, in red light conditions; this inactivates their co-shuttling to the nucleus. Regulates phototropic responses both in the nucleus (e.g. hypocotyl elongation and cotyledon opening under high-irradiance conditions and seed germination under very-low-fluence conditions) and in the cytoplasm (e.g. negative gravitropism in blue light and red-enhanced phototropism). Promotes seed germination, suppression of hypocotyl elongation, and randomization of hypocotyl growth orientation in far-red light; these responses to far-red light are repressed by UNE10/PIF8. Stabilizes UNE10/PIF8 but sequesters PIF3/PAP3 from its target genes promoters in far-red light. In Arabidopsis thaliana (Mouse-ear cress), this protein is Phytochrome A.